A 583-amino-acid polypeptide reads, in one-letter code: Hyaluronan synthase-related protein (583 aa).

The Cytoplasmic portion of the chain corresponds to 1 to 29; the sequence is MENTTDPENIPVSKPKYPTIRRILSQTFR. A helical transmembrane segment spans residues 30-50; sequence ILLLFSITTAYVLGYQALCHQ. Topologically, residues 51 to 52 are extracellular; that stretch reads GL. Residues 53–73 form a helical membrane-spanning segment; the sequence is LITFGLYGAAMLLHLLMQGIF. Topologically, residues 74–393 are cytoplasmic; it reads ANLEIRRIEK…CNAQWWHQHH (320 aa). Residues 394–414 traverse the membrane as a helical segment; the sequence is IWMTYESATGIFFPFFVTAVL. Residues 415 to 425 are Extracellular-facing; it reads IRLMYSSSLCN. The chain crosses the membrane as a helical span at residues 426–446; it reads IVWLFLCIQIMSLLLSLYASW. Topologically, residues 447–457 are cytoplasmic; that stretch reads QSKKLSMVLMS. Residues 458-478 traverse the membrane as a helical segment; the sequence is LYSTLYIIWLLPCQLVALLTI. Over 479–497 the chain is Extracellular; sequence AKSDWGTSGRKKVVNNYVP. A helical transmembrane segment spans residues 498-518; sequence LFSLSIWAAVLLGGLCYSMYI. Topologically, residues 519–535 are cytoplasmic; sequence GCRKDWSKPQANRELYH. A helical membrane pass occupies residues 536-556; it reads LLYGCAGYMAYWVLMTVIYCV. The Extracellular portion of the chain corresponds to 557–583; sequence SGSCCKMRSQAVPQTHDITSLSVSLLV.

The protein belongs to the NodC/HAS family.

Its subcellular location is the membrane. The chain is Hyaluronan synthase-related protein (has-rs) from Xenopus laevis (African clawed frog).